The following is a 343-amino-acid chain: tRNA N6-adenosine threonylcarbamoyltransferase (343 aa).

Residues His116 and His120 each contribute to the Fe cation site. Substrate is bound by residues 138 to 142 (LVSGG), Asp172, Gly185, Asp189, and Asn277. Asp305 contributes to the Fe cation binding site.

It belongs to the KAE1 / TsaD family. It depends on Fe(2+) as a cofactor.

It is found in the cytoplasm. It catalyses the reaction L-threonylcarbamoyladenylate + adenosine(37) in tRNA = N(6)-L-threonylcarbamoyladenosine(37) in tRNA + AMP + H(+). Its function is as follows. Required for the formation of a threonylcarbamoyl group on adenosine at position 37 (t(6)A37) in tRNAs that read codons beginning with adenine. Is involved in the transfer of the threonylcarbamoyl moiety of threonylcarbamoyl-AMP (TC-AMP) to the N6 group of A37, together with TsaE and TsaB. TsaD likely plays a direct catalytic role in this reaction. The chain is tRNA N6-adenosine threonylcarbamoyltransferase from Mycobacterium ulcerans (strain Agy99).